The sequence spans 234 residues: Phosphoribosylaminoimidazole-succinocarboxamide synthase (234 aa).

Belongs to the SAICAR synthetase family.

The catalysed reaction is 5-amino-1-(5-phospho-D-ribosyl)imidazole-4-carboxylate + L-aspartate + ATP = (2S)-2-[5-amino-1-(5-phospho-beta-D-ribosyl)imidazole-4-carboxamido]succinate + ADP + phosphate + 2 H(+). The protein operates within purine metabolism; IMP biosynthesis via de novo pathway; 5-amino-1-(5-phospho-D-ribosyl)imidazole-4-carboxamide from 5-amino-1-(5-phospho-D-ribosyl)imidazole-4-carboxylate: step 1/2. The sequence is that of Phosphoribosylaminoimidazole-succinocarboxamide synthase from Clostridium botulinum (strain Loch Maree / Type A3).